A 631-amino-acid polypeptide reads, in one-letter code: Phosphomethylpyrimidine synthase (631 aa).

Substrate is bound by residues asparagine 239, methionine 268, tyrosine 297, histidine 333, 353 to 355 (SRG), 394 to 397 (DGLR), and glutamate 433. A Zn(2+)-binding site is contributed by histidine 437. Tyrosine 460 is a substrate binding site. Histidine 501 contributes to the Zn(2+) binding site. The [4Fe-4S] cluster site is built by cysteine 581, cysteine 584, and cysteine 589.

This sequence belongs to the ThiC family. In terms of assembly, homodimer. [4Fe-4S] cluster is required as a cofactor.

The catalysed reaction is 5-amino-1-(5-phospho-beta-D-ribosyl)imidazole + S-adenosyl-L-methionine = 4-amino-2-methyl-5-(phosphooxymethyl)pyrimidine + CO + 5'-deoxyadenosine + formate + L-methionine + 3 H(+). It functions in the pathway cofactor biosynthesis; thiamine diphosphate biosynthesis. Functionally, catalyzes the synthesis of the hydroxymethylpyrimidine phosphate (HMP-P) moiety of thiamine from aminoimidazole ribotide (AIR) in a radical S-adenosyl-L-methionine (SAM)-dependent reaction. The chain is Phosphomethylpyrimidine synthase from Ralstonia nicotianae (strain ATCC BAA-1114 / GMI1000) (Ralstonia solanacearum).